Reading from the N-terminus, the 129-residue chain is Histone H3-like centromeric protein A (129 aa).

Basic residues predominate over residues 1-14 (MGPRRKPRTPRRRP). Residues 1–30 (MGPRRKPRTPRRRPSSPVPGPSRRSSRPGK) form a disordered region. At Gly-2 the chain carries N,N,N-trimethylglycine. 3 positions are modified to phosphoserine: Ser-16, Ser-22, and Ser-57. The H3-like stretch occupies residues 30 to 129 (KRRKFLWLKE…RIRGIEGGLG (100 aa)). Positions 64–105 (CGKFTRGVDLCWQAQALLALQEAAEAFLVHLFEDAYLLTLHA) are CATD.

This sequence belongs to the histone H3 family. As to quaternary structure, component of centromeric nucleosomes, where DNA is wrapped around a histone octamer core. The octamer contains two molecules each of H2A, H2B, CENPA and H4 assembled in one CENPA-H4 heterotetramer and two H2A-H2B heterodimers. CENPA modulates the DNA-binding characteristics of nucleosomes so that protruding DNA ends have higher flexibility than in nucleosomes containing conventional histone H3. Inhibits binding of histone H1 to nucleosomes, since histone H1 binds preferentially to rigid DNA linkers that protrude from nucleosomes. Nucleosomes containing CENPA also contain histone H2A variants such as MACROH2A and H2A.Z/H2AZ1. The CENPA-H4 heterotetramer is more compact and structurally more rigid than corresponding H3-H4 heterotetramers. Can assemble into nucleosomes that contain both CENPA and histone H3.3; these nucleosomes interact with a single CENPC chain. Heterotrimer composed of HJURP, CENPA and histone H4, where HJURP interacts with the dimer formed by CENPA and histone H4 and prevents tetramerization of CENPA and H4. Component of the CENPA-NAC complex, at least composed of CENPA, CENPC, CENPH, CENPM, CENPN, CENPT and CENPU. Interacts (via CATD domain) with HJURP; the interaction is direct and is required for its localization to centromeres. Interacts with CENPC, CENPN and CENPT; interaction is direct. Part of a centromere complex consisting of CENPA, CENPT and CENPW. Identified in centromere complexes containing histones H2A, H2B and H4, and at least CENPA, CENPB, CENPC, CENPT, CENPN, HJURP, SUPT16H, SSRP1 and RSF1. Can self-associate. The CENPA-H4 heterotetramer can bind DNA by itself (in vitro). Interacts with CDK1, PPP1CA and RBBP7. Post-translationally, trimethylated by NTMT1 at the N-terminal glycine after cleavage of Met-1. Methylation is low before incorporation into nucleosomes and increases with cell cycle progression, with the highest levels in mitotic nucleosomes. Phosphorylated by CDK1 at Ser-57 during early mitosis; this abolishes association with chromatin and centromeres, prevents interaction with HJURP and thereby prevents premature assembly of CENPA into centromeres. Dephosphorylated at Ser-57 by PPP1CA during late mitosis. In terms of processing, poly-ADP-ribosylated by PARP1.

The protein resides in the nucleus. The protein localises to the chromosome. It localises to the centromere. Histone H3-like nucleosomal protein that is specifically found in centromeric nucleosomes. Replaces conventional H3 in the nucleosome core of centromeric chromatin that serves as an assembly site for the inner kinetochore. The presence of CENPA subtly modifies the nucleosome structure and the way DNA is wrapped around the nucleosome and gives rise to protruding DNA ends that are less well-ordered and rigid compared to nucleosomes containing histone H3. May serve as an epigenetic mark that propagates centromere identity through replication and cell division. Required for recruitment and assembly of kinetochore proteins, and as a consequence required for progress through mitosis, chromosome segregation and cytokinesis. This is Histone H3-like centromeric protein A (CENPA) from Cricetulus griseus (Chinese hamster).